The sequence spans 445 residues: GTPase Der (445 aa).

EngA-type G domains follow at residues 3 to 166 (PVIA…AERV) and 180 to 353 (IRIG…ESCY). GTP contacts are provided by residues 9 to 16 (GRPNVGKS), 56 to 60 (DTGGI), 118 to 121 (NKTD), 186 to 193 (GRPNVGKS), 233 to 237 (DTAGI), and 298 to 301 (NKWD). Residues 354–438 (AKWTTNRLTR…PIIFEFKSAE (85 aa)) form the KH-like domain.

The protein belongs to the TRAFAC class TrmE-Era-EngA-EngB-Septin-like GTPase superfamily. EngA (Der) GTPase family. Associates with the 50S ribosomal subunit.

Its function is as follows. GTPase that plays an essential role in the late steps of ribosome biogenesis. The protein is GTPase Der of Marinomonas sp. (strain MWYL1).